We begin with the raw amino-acid sequence, 609 residues long: ATP-dependent lipid A-core flippase (609 aa).

6 helical membrane-spanning segments follow: residues 47–67 (LLAA…IYLI), 88–108 (ILML…VGSF), 167–187 (AIIT…VMFV), 190–210 (WQLS…ISII), 279–299 (VIQI…AIFG), and 305–325 (GSSW…AAIL). Residues 47–340 (LLAAIGSIFF…LTKVNVVIQK (294 aa)) enclose the ABC transmembrane type-1 domain. In terms of domain architecture, ABC transporter spans 372–606 (VTIKDLSFAF…GGLYTRLYQS (235 aa)). 404-411 (GKSGSGKT) serves as a coordination point for ATP.

This sequence belongs to the ABC transporter superfamily. Lipid exporter (TC 3.A.1.106) family. As to quaternary structure, homodimer.

It is found in the cell inner membrane. The enzyme catalyses ATP + H2O + lipid A-core oligosaccharideSide 1 = ADP + phosphate + lipid A-core oligosaccharideSide 2.. Its function is as follows. Involved in lipopolysaccharide (LPS) biosynthesis. Translocates lipid A-core from the inner to the outer leaflet of the inner membrane. Transmembrane domains (TMD) form a pore in the inner membrane and the ATP-binding domain (NBD) is responsible for energy generation. The sequence is that of ATP-dependent lipid A-core flippase from Francisella tularensis subsp. holarctica (strain LVS).